Reading from the N-terminus, the 200-residue chain is Small ribosomal subunit protein uS4 (200 aa).

Positions 22-42 are disordered; that stretch reads TGKELEKRPYAPGPHGPGQRK. The S4 RNA-binding domain occupies 92 to 155; sequence ARLDNVVYKL…RNLSIIKESV (64 aa).

The protein belongs to the universal ribosomal protein uS4 family. In terms of assembly, part of the 30S ribosomal subunit. Contacts protein S5. The interaction surface between S4 and S5 is involved in control of translational fidelity.

In terms of biological role, one of the primary rRNA binding proteins, it binds directly to 16S rRNA where it nucleates assembly of the body of the 30S subunit. Functionally, with S5 and S12 plays an important role in translational accuracy. The protein is Small ribosomal subunit protein uS4 of Bacillus velezensis (strain DSM 23117 / BGSC 10A6 / LMG 26770 / FZB42) (Bacillus amyloliquefaciens subsp. plantarum).